Reading from the N-terminus, the 396-residue chain is Inositol hexakisphosphate kinase 3 (396 aa).

Pro-206 to Gly-214 is a binding site for substrate.

The protein belongs to the inositol phosphokinase (IPK) family. Highly expressed in cerebellum, brain cortex, kidney, thymus and lung. Detected at lower levels in hippocampus, testis, heart and olfactory bulb.

The protein localises to the cytoplasm. The enzyme catalyses 1D-myo-inositol hexakisphosphate + ATP = 5-diphospho-1D-myo-inositol 1,2,3,4,6-pentakisphosphate + ADP. It catalyses the reaction 1-diphospho-1D-myo-inositol 2,3,4,5,6-pentakisphosphate + ATP + H(+) = 1,5-bis(diphospho)-1D-myo-inositol 2,3,4,6-tetrakisphosphate + ADP. Converts inositol hexakisphosphate (InsP6) to diphosphoinositol pentakisphosphate (InsP7/PP-InsP5). Converts 1,3,4,5,6-pentakisphosphate (InsP5) to PP-InsP4. The chain is Inositol hexakisphosphate kinase 3 (Ip6k3) from Mus musculus (Mouse).